We begin with the raw amino-acid sequence, 444 residues long: Zinc finger CCCH domain-containing protein 63 (444 aa).

C3H1-type zinc fingers lie at residues 56-84 (RIGE…HPAD), 101-129 (RIGQ…HPRE), and 147-175 (RPNE…HPQP). Residues 251 to 276 (GSSSSDDQQRTAGGAQYYTGSRHSET) form a disordered region. 2 consecutive C3H1-type zinc fingers follow at residues 309 to 337 (RPDQ…HPKE) and 355 to 383 (RPGE…HPMG). The segment at 405 to 444 (PVPAHSEVSPDNVSGRSRRITHSDSQQIPSGERGTEREAS) is disordered.

The chain is Zinc finger CCCH domain-containing protein 63 from Oryza sativa subsp. japonica (Rice).